Here is a 92-residue protein sequence, read N- to C-terminus: Alpha-conotoxin VxXXA (92 aa).

The signal sequence occupies residues 1–24 (MPKLEMMLLVLLIFPLSYFIAAGG). Positions 25–45 (QVVQVDRRGDGLAGYLQRGDR) are excised as a propeptide. Pro-55, Pro-70, and Pro-74 each carry 4-hydroxyproline; partial. Disulfide bonds link Cys-63/Cys-72, Cys-68/Cys-80, Cys-73/Cys-90, and Cys-78/Cys-92.

It belongs to the conotoxin D superfamily. As to quaternary structure, homodimer or pseudo-homodimer. Three dimers exist: homodimer of VxXXA, pseudo-homodimer of both VxXXA and [hydroxyPro-74]VxXXA and homodimer of [hydroxyPro-74]VxXXA. These three components exist in a 1:2:1 ratio. VxXXA stands for the form with the Pro-55 hydroxylated. A second major form has both Pro-55 and Pro-74 hydroxylated. The two major forms VxXXA and [hydroxyPro-74]VxXXA exist in a 1:1 ratio. In terms of processing, minor forms are [hydroxyPro-70,hydroxyPro-74]VxXXA and [Pro-55]VxXXA. Expressed by the venom duct.

The protein resides in the secreted. Alpha-conotoxins act on postsynaptic membranes, they bind to the nicotinic acetylcholine receptors (nAChR) and thus inhibit them. Through its two C-terminal domains, this homodimeric protein would bind to two nAChR allosteric sites, located outside the nAChR C-loop of the principal binding face and at the adjacent binding interface in a clockwise direction. This toxin specifically blocks mammalian neuronal nAChR of the alpha-7/CHRNA7, alpha-3-beta-2/CHRNA3-CHRNB2 (IC(50)=370 nM) and alpha-4-beta-2/CHRNA4-CHRNB2 subtypes. VxXXB inhibits alpha-7/CHRNA7 and alpha-3-beta-2/CHRNA3-CHRNB2 nAChR subtypes with the highest efficiency, followed by VxXXA and VxXXC. VxXXB and VxXXC inhibit the alpha-4-beta-2/CHRNA4-CHRNB2 nAChR subtype more efficiently than VxXXA. The protein is Alpha-conotoxin VxXXA of Conus vexillum (Flag cone).